The chain runs to 106 residues: Chaperone modulatory protein CbpM (106 aa).

Belongs to the CbpM family.

Its function is as follows. Interacts with CbpA and inhibits both the DnaJ-like co-chaperone activity and the DNA binding activity of CbpA. Together with CbpA, modulates the activity of the DnaK chaperone system. Does not inhibit the co-chaperone activity of DnaJ. This chain is Chaperone modulatory protein CbpM, found in Coxiella burnetii (strain CbuK_Q154) (Coxiella burnetii (strain Q154)).